The primary structure comprises 769 residues: Glutathione biosynthesis bifunctional protein GshAB (769 aa).

The glutamate--cysteine ligase stretch occupies residues 1–347 (MLDSFKEDPK…QLADENENNI (347 aa)). The ATP-grasp domain maps to 514–768 (KLVLAEHDIR…IGDKILDFLF (255 aa)). An ATP-binding site is contributed by 541-599 (SLFEDKQIVVKPKSTNYGWGISIFKNKFTLEDYQEALNIAFSYDSSVIIEEFIPGDEFR). Residues Asp-721, Glu-738, and Asn-740 each contribute to the Mg(2+) site. Asp-721, Glu-738, and Asn-740 together coordinate Mn(2+).

This sequence in the N-terminal section; belongs to the glutamate--cysteine ligase type 1 family. Type 2 subfamily. Monomer. Requires Mg(2+) as cofactor. Mn(2+) serves as cofactor.

It carries out the reaction L-cysteine + L-glutamate + ATP = gamma-L-glutamyl-L-cysteine + ADP + phosphate + H(+). It catalyses the reaction gamma-L-glutamyl-L-cysteine + glycine + ATP = glutathione + ADP + phosphate + H(+). Its pathway is sulfur metabolism; glutathione biosynthesis; glutathione from L-cysteine and L-glutamate: step 1/2. It functions in the pathway sulfur metabolism; glutathione biosynthesis; glutathione from L-cysteine and L-glutamate: step 2/2. Synthesizes glutathione from L-glutamate and L-cysteine via gamma-L-glutamyl-L-cysteine. This is Glutathione biosynthesis bifunctional protein GshAB from Listeria monocytogenes serotype 4b (strain F2365).